We begin with the raw amino-acid sequence, 315 residues long: FAD-linked oxidoreductase sthB (315 aa).

The FAD-binding PCMH-type domain occupies 19–201 (QPCSLGNYVS…LSMTSRVHAD (183 aa)).

It belongs to the oxygen-dependent FAD-linked oxidoreductase family.

It catalyses the reaction betaenone C = betaenone A. It carries out the reaction stemphyloxin I = stemphyloxin II. It functions in the pathway mycotoxin biosynthesis. FAD-linked oxidoreductase; part of the gene cluster that mediates the biosynthesis of the phytotoxin stemphyloxin II. The first step of the pathway is the synthesis of dehydroprobetaenone I by the polyketide synthase sthA and the enoyl reductase sthE via condensation of one acetyl-CoA starter unit with 7 malonyl-CoA units and 5 methylations. The C-terminal reductase (R) domain of sthA catalyzes the reductive release of the polyketide chain. Because sthA lacks a designated enoylreductase (ER) domain, the required activity is provided the enoyl reductase sthE. The short-chain dehydrogenase/reductase sthC then catalyzes reduction of dehydroprobetaenone I to probetaenone I. The cytochrome P450 monooxygenase sthF catalyzes successive epoxidation, oxidation (resulting from epoxide opening) and hydroxylation to install a tertiary alcohol in the decaline ring to yield betaenone C from dehydroprobetaenone I and betaenone B from probetaenone I. The FAD-linked oxidoreductase sthB is responsible for the conversion of betaenone C to betaenone A via an intramolecular aldol reaction between C-1 and C-17 to form the bridged tricyclic system in betaenone A. Finally, the cytochrome P450 monooxygenase sthD catalyzes the hydroxylation of C-15 to afford the final metabolite stemphyloxin II. In Phaeosphaeria nodorum (strain SN15 / ATCC MYA-4574 / FGSC 10173) (Glume blotch fungus), this protein is FAD-linked oxidoreductase sthB.